The chain runs to 372 residues: uncharacterized protein (372 aa).

A signal peptide spans 1–24 (MSYYQIIVCILASISYIILLEVIA). Residues 92–215 (PNRNDTDASY…SSYNLLWSDL (124 aa)) enclose the PA domain. Residues 236–256 (FWPFLLCFSPSIIMLITVQAL) form a helical membrane-spanning segment. The residue at position 280 (Ser280) is a Phosphoserine. The segment at 321–363 (CVICLESFTKGDKVVALPCKHEFHRPCIAKWIVDYRHACPTCN) adopts an RING-type; atypical zinc-finger fold.

It is found in the golgi apparatus membrane. The protein resides in the vacuole membrane. This is an uncharacterized protein from Schizosaccharomyces pombe (strain 972 / ATCC 24843) (Fission yeast).